The sequence spans 545 residues: Glucose-6-phosphate isomerase (545 aa).

The active-site Proton donor is Glu-351. Active-site residues include His-382 and Lys-510.

This sequence belongs to the GPI family.

It localises to the cytoplasm. It catalyses the reaction alpha-D-glucose 6-phosphate = beta-D-fructose 6-phosphate. It functions in the pathway carbohydrate biosynthesis; gluconeogenesis. It participates in carbohydrate degradation; glycolysis; D-glyceraldehyde 3-phosphate and glycerone phosphate from D-glucose: step 2/4. Functionally, catalyzes the reversible isomerization of glucose-6-phosphate to fructose-6-phosphate. The protein is Glucose-6-phosphate isomerase of Shewanella pealeana (strain ATCC 700345 / ANG-SQ1).